Consider the following 292-residue polypeptide: 33 kDa chaperonin (292 aa).

2 disulfides stabilise this stretch: Cys-230-Cys-232 and Cys-263-Cys-266.

This sequence belongs to the HSP33 family. Under oxidizing conditions two disulfide bonds are formed involving the reactive cysteines. Under reducing conditions zinc is bound to the reactive cysteines and the protein is inactive.

The protein localises to the cytoplasm. Redox regulated molecular chaperone. Protects both thermally unfolding and oxidatively damaged proteins from irreversible aggregation. Plays an important role in the bacterial defense system toward oxidative stress. This is 33 kDa chaperonin from Salmonella typhi.